The sequence spans 670 residues: DNA ligase (670 aa).

NAD(+)-binding positions include 33 to 37 (DAEYD), 82 to 83 (SL), and Glu114. The active-site N6-AMP-lysine intermediate is Lys116. Arg137, Glu174, Lys291, and Lys315 together coordinate NAD(+). Cys409, Cys412, Cys427, and Cys433 together coordinate Zn(2+). Residues 593-670 (GAELPLEGKT…TEQDLLELIN (78 aa)) form the BRCT domain.

This sequence belongs to the NAD-dependent DNA ligase family. LigA subfamily. Requires Mg(2+) as cofactor. Mn(2+) serves as cofactor.

It carries out the reaction NAD(+) + (deoxyribonucleotide)n-3'-hydroxyl + 5'-phospho-(deoxyribonucleotide)m = (deoxyribonucleotide)n+m + AMP + beta-nicotinamide D-nucleotide.. Functionally, DNA ligase that catalyzes the formation of phosphodiester linkages between 5'-phosphoryl and 3'-hydroxyl groups in double-stranded DNA using NAD as a coenzyme and as the energy source for the reaction. It is essential for DNA replication and repair of damaged DNA. In Vibrio parahaemolyticus serotype O3:K6 (strain RIMD 2210633), this protein is DNA ligase.